The following is a 303-amino-acid chain: RING finger protein 148 (303 aa).

Positions 1–34 are cleaved as a signal peptide; that stretch reads MSLLRITSSAHSSASSRLWRLGIFLLLSLPDSKG. Residue Asn43 is glycosylated (N-linked (GlcNAc...) asparagine). The 103-residue stretch at 65–167 folds into the PA domain; the sequence is HSPLERVSGV…LKGMELLHLI (103 aa). Residues 186–208 form a helical membrane-spanning segment; it reads WLSHYIMSLFTFLTATVAYLFLY. The segment at 256 to 297 adopts an RING-type; atypical zinc-finger fold; it reads CVVCFDIYKPQDVVRILTCKHIFHKACIDPWLLAHRTCPMCK.

The protein resides in the membrane. The polypeptide is RING finger protein 148 (RNF148) (Bos taurus (Bovine)).